The primary structure comprises 571 residues: Urease subunit alpha (571 aa).

The Urease domain maps to 131-571 (GGIDAHIHFI…LPMAQRYFLF (441 aa)). The Ni(2+) site is built by histidine 136, histidine 138, and lysine 219. An N6-carboxylysine modification is found at lysine 219. Histidine 221 contacts substrate. 2 residues coordinate Ni(2+): histidine 248 and histidine 274. Histidine 322 serves as the catalytic Proton donor. Residue aspartate 362 participates in Ni(2+) binding.

It belongs to the metallo-dependent hydrolases superfamily. Urease alpha subunit family. Heterotrimer of UreA (gamma), UreB (beta) and UreC (alpha) subunits. Three heterotrimers associate to form the active enzyme. Ni cation is required as a cofactor. Carboxylation allows a single lysine to coordinate two nickel ions.

The protein resides in the cytoplasm. The catalysed reaction is urea + 2 H2O + H(+) = hydrogencarbonate + 2 NH4(+). It functions in the pathway nitrogen metabolism; urea degradation; CO(2) and NH(3) from urea (urease route): step 1/1. This Nostoc punctiforme (strain ATCC 29133 / PCC 73102) protein is Urease subunit alpha.